Consider the following 327-residue polypeptide: 1-aminocyclopropane-1-carboxylate oxidase 1 (327 aa).

Residues 157-257 form the Fe2OG dioxygenase domain; the sequence is PTFGTKVSNY…RMSIASFYNP (101 aa). Fe cation contacts are provided by histidine 181, aspartate 183, and histidine 238.

It belongs to the iron/ascorbate-dependent oxidoreductase family. Fe cation is required as a cofactor.

It catalyses the reaction 1-aminocyclopropane-1-carboxylate + L-ascorbate + O2 = ethene + L-dehydroascorbate + hydrogen cyanide + CO2 + 2 H2O. It participates in alkene biosynthesis; ethylene biosynthesis via S-adenosyl-L-methionine; ethylene from S-adenosyl-L-methionine: step 2/2. The sequence is that of 1-aminocyclopropane-1-carboxylate oxidase 1 (ACO1) from Doritaenopsis sp. (Moth orchid).